The primary structure comprises 217 residues: UPF0502 protein swp_3027 (217 aa).

The protein belongs to the UPF0502 family.

The protein is UPF0502 protein swp_3027 of Shewanella piezotolerans (strain WP3 / JCM 13877).